Reading from the N-terminus, the 257-residue chain is Imidazole glycerol phosphate synthase subunit HisF (257 aa).

Active-site residues include D12 and D131.

Belongs to the HisA/HisF family. As to quaternary structure, heterodimer of HisH and HisF.

It localises to the cytoplasm. The enzyme catalyses 5-[(5-phospho-1-deoxy-D-ribulos-1-ylimino)methylamino]-1-(5-phospho-beta-D-ribosyl)imidazole-4-carboxamide + L-glutamine = D-erythro-1-(imidazol-4-yl)glycerol 3-phosphate + 5-amino-1-(5-phospho-beta-D-ribosyl)imidazole-4-carboxamide + L-glutamate + H(+). The protein operates within amino-acid biosynthesis; L-histidine biosynthesis; L-histidine from 5-phospho-alpha-D-ribose 1-diphosphate: step 5/9. IGPS catalyzes the conversion of PRFAR and glutamine to IGP, AICAR and glutamate. The HisF subunit catalyzes the cyclization activity that produces IGP and AICAR from PRFAR using the ammonia provided by the HisH subunit. This is Imidazole glycerol phosphate synthase subunit HisF from Burkholderia thailandensis (strain ATCC 700388 / DSM 13276 / CCUG 48851 / CIP 106301 / E264).